The following is a 130-amino-acid chain: Iron-sulfur cluster insertion protein ErpA (130 aa).

Iron-sulfur cluster contacts are provided by C58, C122, and C124.

Belongs to the HesB/IscA family. As to quaternary structure, homodimer. Iron-sulfur cluster is required as a cofactor.

Its function is as follows. Required for insertion of 4Fe-4S clusters for at least IspG. This chain is Iron-sulfur cluster insertion protein ErpA, found in Stenotrophomonas maltophilia (strain R551-3).